The primary structure comprises 453 residues: UDP-glucose 6-dehydrogenase (453 aa).

NAD(+) contacts are provided by residues 2–19 (RLCVIGAGYVGLVTAACF), Val11, Thr121, and Glu158. Residues 154-158 (EFLKE), Lys210, Asn214, 255-259 (FIYAG), and Gly263 each bind substrate. Catalysis depends on Cys266, which acts as the Nucleophile. Lys269 contacts NAD(+). Lys327 contacts substrate. Residue Arg334 coordinates NAD(+).

This sequence belongs to the UDP-glucose/GDP-mannose dehydrogenase family.

The catalysed reaction is UDP-alpha-D-glucose + 2 NAD(+) + H2O = UDP-alpha-D-glucuronate + 2 NADH + 3 H(+). It functions in the pathway nucleotide-sugar biosynthesis; UDP-alpha-D-glucuronate biosynthesis; UDP-alpha-D-glucuronate from UDP-alpha-D-glucose: step 1/1. The protein operates within bacterial outer membrane biogenesis; lipopolysaccharide biosynthesis. The polypeptide is UDP-glucose 6-dehydrogenase (udg) (Pseudomonas aeruginosa (strain ATCC 15692 / DSM 22644 / CIP 104116 / JCM 14847 / LMG 12228 / 1C / PRS 101 / PAO1)).